Consider the following 129-residue polypeptide: Lysozyme C-1 (129 aa).

A C-type lysozyme domain is found at 1–129 (KVFERCELAR…VSSYVEGCTL (129 aa)). 4 disulfides stabilise this stretch: Cys-6-Cys-127, Cys-30-Cys-115, Cys-65-Cys-81, and Cys-77-Cys-95. Catalysis depends on residues Glu-35 and Asp-53.

Belongs to the glycosyl hydrolase 22 family. As to quaternary structure, monomer.

It carries out the reaction Hydrolysis of (1-&gt;4)-beta-linkages between N-acetylmuramic acid and N-acetyl-D-glucosamine residues in a peptidoglycan and between N-acetyl-D-glucosamine residues in chitodextrins.. In terms of biological role, lysozymes have primarily a bacteriolytic function; those in tissues and body fluids are associated with the monocyte-macrophage system and enhance the activity of immunoagents. The polypeptide is Lysozyme C-1 (Capra hircus (Goat)).